Here is a 997-residue protein sequence, read N- to C-terminus: uncharacterized protein (997 aa).

Belongs to the MG414/MG415 family.

This is an uncharacterized protein from Mycoplasma pneumoniae (strain ATCC 29342 / M129 / Subtype 1) (Mycoplasmoides pneumoniae).